The following is a 105-amino-acid chain: Transcriptional regulator SutA (105 aa).

The segment covering M1–E37 has biased composition (acidic residues). The segment at M1–I105 is disordered. 2 stretches are compositionally biased toward basic and acidic residues: residues A59–E83 and P92–I105.

As to quaternary structure, interacts with RNA polymerase.

In terms of biological role, causes widespread changes in gene expression, and plays a direct role in the regulation of genes encoding ribosomal components. Associates with chromosomal DNA through interaction with RNA polymerase. Contributes to biofilm formation and secondary metabolite production. Important during transitions to and from the survival state. This is Transcriptional regulator SutA from Pseudomonas aeruginosa (strain UCBPP-PA14).